Reading from the N-terminus, the 222-residue chain is Charged multivesicular body protein 3 (222 aa).

The N-myristoyl glycine moiety is linked to residue glycine 2. The intramolecular interaction with C-terminus stretch occupies residues 2 to 113 (GLFGKTQEKP…LQKSTEVMKA (112 aa)). A coiled-coil region spans residues 22–54 (KIRKEMRVVDRQIRDIQREEEKVKRSVKDAAKK). Important for autoinhibitory function stretches follow at residues 59-64 (VCVVLA) and 168-169 (IL). Positions 141–222 (EEMLEDTFES…MQSRLATLRS (82 aa)) form a coiled coil. The tract at residues 151–220 (MDDQEEMEEE…EAMQSRLATL (70 aa)) is intramolecular interaction with N-terminus. Residues 151–222 (MDDQEEMEEE…MQSRLATLRS (72 aa)) are interaction with VPS4A. Residue lysine 179 forms a Glycyl lysine isopeptide (Lys-Gly) (interchain with G-Cter in ubiquitin) linkage. Positions 180 to 222 (APSKVTDALPEPEPSGAMAASEDEEEEEEALEAMQSRLATLRS) are disordered. Interaction with STAMBP stretches follow at residues 196 to 222 (AMAA…TLRS), 203 to 207 (EEEEE), and 221 to 222 (RS). Serine 200 is subject to Phosphoserine. Over residues 200-210 (SEDEEEEEEAL) the composition is skewed to acidic residues. The MIT-interacting motif signature appears at 201–211 (EDEEEEEEALE).

The protein belongs to the SNF7 family. In terms of assembly, probable core component of the endosomal sorting required for transport complex III (ESCRT-III). ESCRT-III components are thought to multimerize to form a flat lattice on the perimeter membrane of the endosome. Several assembly forms of ESCRT-III may exist that interact and act sequentially. Forms a metastable monomer in solution; its core structure (without part of the putative autoinhibitory C-terminal acidic region) oligomerizes into a flat lattice via two different dimerization interfaces. In vitro, heteromerizes with CHMP2A (but not CHMP4) to form helical tubular structures that expose membrane-interacting sites on the outside whereas VPS4B can associate on the inside of the tubule. May interact with IGFBP7; the relevance of such interaction however remains unclear. Interacts with CHMP2A. Interacts with CHMP4A; the interaction requires the release of CHMP4A autoinhibition. Interacts with VPS4A. Interacts with STAMBP; the interaction appears to relieve the autoinhibition of CHMP3. Interacts with VTA1.

The protein localises to the cytoplasm. The protein resides in the cytosol. It is found in the membrane. It localises to the endosome. Its subcellular location is the late endosome membrane. In terms of biological role, probable core component of the endosomal sorting required for transport complex III (ESCRT-III) which is involved in multivesicular bodies (MVBs) formation and sorting of endosomal cargo proteins into MVBs. MVBs contain intraluminal vesicles (ILVs) that are generated by invagination and scission from the limiting membrane of the endosome and mostly are delivered to lysosomes enabling degradation of membrane proteins, such as stimulated growth factor receptors, lysosomal enzymes and lipids. The MVB pathway appears to require the sequential function of ESCRT-O, -I,-II and -III complexes. ESCRT-III proteins mostly dissociate from the invaginating membrane before the ILV is released. The ESCRT machinery also functions in topologically equivalent membrane fission events, such as the terminal stages of cytokinesis and the budding of enveloped viruses (lentiviruses). ESCRT-III proteins are believed to mediate the necessary vesicle extrusion and/or membrane fission activities, possibly in conjunction with the AAA ATPase VPS4. Selectively binds to phosphatidylinositol 3,5-bisphosphate PtdIns(3,5)P2 and PtdIns(3,4)P2 in preference to other phosphoinositides tested. Involved in late stages of cytokinesis. Plays a role in endosomal sorting/trafficking of EGF receptor. The protein is Charged multivesicular body protein 3 (CHMP3) of Pongo abelii (Sumatran orangutan).